The following is a 206-amino-acid chain: Large ribosomal subunit protein uL4 (206 aa).

A disordered region spans residues 45–78 (QGNRAQKDREQVKHTTKKPWRQKGTGRARAGMSS). Basic residues predominate over residues 58 to 70 (HTTKKPWRQKGTG).

The protein belongs to the universal ribosomal protein uL4 family. In terms of assembly, part of the 50S ribosomal subunit.

Its function is as follows. One of the primary rRNA binding proteins, this protein initially binds near the 5'-end of the 23S rRNA. It is important during the early stages of 50S assembly. It makes multiple contacts with different domains of the 23S rRNA in the assembled 50S subunit and ribosome. Functionally, forms part of the polypeptide exit tunnel. The polypeptide is Large ribosomal subunit protein uL4 (Burkholderia ambifaria (strain MC40-6)).